Consider the following 925-residue polypeptide: Conserved oligomeric Golgi complex subunit 3 (925 aa).

Disordered stretches follow at residues 68-88 (EENQ…QQQQ), 416-446 (DLNN…NNTN), and 863-925 (SKQS…PQQL). 3 stretches are compositionally biased toward low complexity: residues 71 to 88 (QQLQ…QQQQ), 418 to 446 (NNNN…NNTN), and 867 to 904 (NNNN…NNKN).

This sequence belongs to the COG3 family. Component of the conserved oligomeric Golgi complex which is composed of eight different subunits and is required for normal Golgi morphology and localization.

It localises to the golgi apparatus membrane. Functionally, required for normal Golgi function. In Dictyostelium discoideum (Social amoeba), this protein is Conserved oligomeric Golgi complex subunit 3 (cog3).